Consider the following 492-residue polypeptide: Bifunctional purine biosynthesis protein PurH (492 aa).

Residues 1-144 (MKKAILSVSN…KNYKHVTTIV (144 aa)) enclose the MGS-like domain.

This sequence belongs to the PurH family.

It carries out the reaction (6R)-10-formyltetrahydrofolate + 5-amino-1-(5-phospho-beta-D-ribosyl)imidazole-4-carboxamide = 5-formamido-1-(5-phospho-D-ribosyl)imidazole-4-carboxamide + (6S)-5,6,7,8-tetrahydrofolate. It catalyses the reaction IMP + H2O = 5-formamido-1-(5-phospho-D-ribosyl)imidazole-4-carboxamide. Its pathway is purine metabolism; IMP biosynthesis via de novo pathway; 5-formamido-1-(5-phospho-D-ribosyl)imidazole-4-carboxamide from 5-amino-1-(5-phospho-D-ribosyl)imidazole-4-carboxamide (10-formyl THF route): step 1/1. It participates in purine metabolism; IMP biosynthesis via de novo pathway; IMP from 5-formamido-1-(5-phospho-D-ribosyl)imidazole-4-carboxamide: step 1/1. This is Bifunctional purine biosynthesis protein PurH from Staphylococcus aureus (strain bovine RF122 / ET3-1).